Consider the following 317-residue polypeptide: 17-beta-hydroxysteroid dehydrogenase type 6 (317 aa).

A signal peptide spans 1–17 (MWLYLAAFVGLYYLLHW). 33-57 (FITGCDSGFGNLLARQLDARGLRVL) provides a ligand contact to NAD(+). Residue Asn-161 is glycosylated (N-linked (GlcNAc...) asparagine). Residue Ser-164 participates in substrate binding. Residue Tyr-176 is the Proton acceptor of the active site. 2 N-linked (GlcNAc...) asparagine glycosylation sites follow: Asn-215 and Asn-256.

The protein belongs to the short-chain dehydrogenases/reductases (SDR) family. Detected in liver and prostate (at protein level). Detected in adult liver, lung, brain, placenta, prostate, adrenal gland, testis, mammary gland, spleen, spinal cord and uterus. Detected in caudate nucleus, and at lower levels in amygdala, corpus callosum, hippocampus, substantia nigra and thalamus. Detected in fetal lung, liver and brain.

It localises to the microsome membrane. The protein localises to the early endosome membrane. It carries out the reaction all-trans-retinol--[retinol-binding protein] + NAD(+) = all-trans-retinal--[retinol-binding protein] + NADH + H(+). The enzyme catalyses all-trans-retinol + NAD(+) = all-trans-retinal + NADH + H(+). The catalysed reaction is androsterone + NAD(+) = 5alpha-androstan-3,17-dione + NADH + H(+). It catalyses the reaction testosterone + NAD(+) = androst-4-ene-3,17-dione + NADH + H(+). It carries out the reaction 5alpha-androstane-3alpha,17beta-diol + NAD(+) = 17beta-hydroxy-5alpha-androstan-3-one + NADH + H(+). The enzyme catalyses 17beta-estradiol + NAD(+) = estrone + NADH + H(+). The catalysed reaction is 17beta-estradiol + NADP(+) = estrone + NADPH + H(+). It catalyses the reaction 3alpha-hydroxy-5alpha-pregnan-20-one + NAD(+) = 5alpha-pregnane-3,20-dione + NADH + H(+). It carries out the reaction 5alpha-androstane-3beta,17beta-diol + NAD(+) = 17beta-hydroxy-5alpha-androstan-3-one + NADH + H(+). The enzyme catalyses 3beta-hydroxy-5alpha-androstan-17-one + NAD(+) = 5alpha-androstan-3,17-dione + NADH + H(+). Functionally, NAD-dependent oxidoreductase with broad substrate specificity that shows both oxidative and reductive activity (in vitro). Has 17-beta-hydroxysteroid dehydrogenase activity towards various steroids (in vitro). Converts 5-alpha-androstan-3-alpha,17-beta-diol to androsterone and estradiol to estrone (in vitro). Has 3-alpha-hydroxysteroid dehydrogenase activity towards androsterone (in vitro). Has retinol dehydrogenase activity towards all-trans-retinol (in vitro). Can convert androsterone to epi-androsterone. Androsterone is first oxidized to 5-alpha-androstane-3,17-dione and then reduced to epi-andosterone. Can act on both C-19 and C-21 3-alpha-hydroxysteroids. The sequence is that of 17-beta-hydroxysteroid dehydrogenase type 6 (HSD17B6) from Homo sapiens (Human).